A 445-amino-acid chain; its full sequence is MTPISVTQLNNQIKSIVESHFEIVLVEGEISKVVYHSSGHLYFTLKDENSSINCAMWKSNLTRMKFRLKEGEKVYVYGALSVYVPRGEYKIIAQSIEPSGVGALQKAFEQLKEELSKLGYFDEARKKSIPRFPRRIAIVTSATGAALQDMLRVAGKRWQLTEIYLFNALVQGDGAAEDIAMKIKLADEFVFEDGSGFDLIIIGRGGGSKEDLWPFNERVVADAVYNASTPIISAVGHEIDYLISDFVADVRAATPSNAMEIALPDKNEILLMLDEMKNAFVYKISHLIQKKERELIHIRELLNASSPVKKLDMKLQECELLLKRFNHSYINQIQKKEKELNELKNILFSLSPVIKINSFEKEIELLKSTFKNKTAQIISSKEKELINLKSAYETLNPKKREKKGFAEITKNGKRIDLKELKIGDIFDVSNADVLIKSKALEKIEN.

The protein belongs to the XseA family. Heterooligomer composed of large and small subunits.

It localises to the cytoplasm. The catalysed reaction is Exonucleolytic cleavage in either 5'- to 3'- or 3'- to 5'-direction to yield nucleoside 5'-phosphates.. Its function is as follows. Bidirectionally degrades single-stranded DNA into large acid-insoluble oligonucleotides, which are then degraded further into small acid-soluble oligonucleotides. The chain is Exodeoxyribonuclease 7 large subunit from Nautilia profundicola (strain ATCC BAA-1463 / DSM 18972 / AmH).